The following is a 69-amino-acid chain: Cell division protein ZapB (69 aa).

Residues 6–68 (LEQLEARVQS…LGKMDQMNSE (63 aa)) are a coiled coil.

The protein belongs to the ZapB family. Homodimer. The ends of the coiled-coil dimer bind to each other, forming polymers. Interacts with FtsZ.

The protein resides in the cytoplasm. Its function is as follows. Non-essential, abundant cell division factor that is required for proper Z-ring formation. It is recruited early to the divisome by direct interaction with FtsZ, stimulating Z-ring assembly and thereby promoting cell division earlier in the cell cycle. Its recruitment to the Z-ring requires functional FtsA or ZipA. This chain is Cell division protein ZapB, found in Tolumonas auensis (strain DSM 9187 / NBRC 110442 / TA 4).